A 123-amino-acid polypeptide reads, in one-letter code: Venom peptide MmKTx1 (123 aa).

The signal sequence occupies residues 1 to 21 (MSIKISAIALFMLSFTVFVNG).

This sequence belongs to the scorpion La1-like peptide family. In terms of processing, contains 4 disulfide bonds. As to expression, expressed by the venom gland.

It localises to the secreted. In Olivierus martensii (Manchurian scorpion), this protein is Venom peptide MmKTx1.